The primary structure comprises 84 residues: Toxin Cex12 (84 aa).

Residues 1–19 (MNSLLMITTCLILVGTVWA) form the signal peptide. The LCN-type CS-alpha/beta domain occupies 20-83 (NDGYLFDKRK…ISRTPGKTCR (64 aa)). 4 disulfides stabilise this stretch: cysteine 31/cysteine 82, cysteine 35/cysteine 58, cysteine 44/cysteine 63, and cysteine 48/cysteine 65.

It belongs to the long (4 C-C) scorpion toxin superfamily. Sodium channel inhibitor family. Beta subfamily. In terms of tissue distribution, expressed by the venom gland.

Its subcellular location is the secreted. In terms of biological role, beta toxins bind voltage-independently at site-4 of sodium channels (Nav) and shift the voltage of activation toward more negative potentials thereby affecting sodium channel activation and promoting spontaneous and repetitive firing. In Centruroides exilicauda (Bark scorpion), this protein is Toxin Cex12.